The following is a 62-amino-acid chain: Large ribosomal subunit protein uL30 (62 aa).

Belongs to the universal ribosomal protein uL30 family. In terms of assembly, part of the 50S ribosomal subunit.

This Halalkalibacterium halodurans (strain ATCC BAA-125 / DSM 18197 / FERM 7344 / JCM 9153 / C-125) (Bacillus halodurans) protein is Large ribosomal subunit protein uL30.